The sequence spans 186 residues: Phosphopantetheine adenylyltransferase (186 aa).

Position 14 (Thr-14) interacts with substrate. Residues 14 to 15 and His-22 contribute to the ATP site; that span reads TF. Residues Lys-46, Leu-78, and Arg-92 each contribute to the substrate site. ATP contacts are provided by residues 93–95, Glu-103, and 128–134; these read GLR and WLYISST.

Belongs to the bacterial CoaD family. Homohexamer. Mg(2+) is required as a cofactor.

It localises to the cytoplasm. The catalysed reaction is (R)-4'-phosphopantetheine + ATP + H(+) = 3'-dephospho-CoA + diphosphate. The protein operates within cofactor biosynthesis; coenzyme A biosynthesis; CoA from (R)-pantothenate: step 4/5. In terms of biological role, reversibly transfers an adenylyl group from ATP to 4'-phosphopantetheine, yielding dephospho-CoA (dPCoA) and pyrophosphate. The protein is Phosphopantetheine adenylyltransferase of Nitratidesulfovibrio vulgaris (strain ATCC 29579 / DSM 644 / CCUG 34227 / NCIMB 8303 / VKM B-1760 / Hildenborough) (Desulfovibrio vulgaris).